Consider the following 892-residue polypeptide: Translation initiation factor IF-2 (892 aa).

Residues 165–175 (EEQAELERQKT) show a composition bias toward basic and acidic residues. Disordered regions lie at residues 165 to 250 (EEQA…EDDS) and 264 to 300 (ERAR…AHGF). The span at 208-222 (PRAVRPAPAARPSVS) shows a compositional bias: low complexity. In terms of domain architecture, tr-type G spans 391–560 (PRPPVVTIMG…SIQAEVLELK (170 aa)). Residues 400-407 (GHVDHGKT), 446-450 (DTPGH), and 500-503 (SKID) each bind GTP.

The protein belongs to the TRAFAC class translation factor GTPase superfamily. Classic translation factor GTPase family. IF-2 subfamily.

It localises to the cytoplasm. Functionally, one of the essential components for the initiation of protein synthesis. Protects formylmethionyl-tRNA from spontaneous hydrolysis and promotes its binding to the 30S ribosomal subunits. Also involved in the hydrolysis of GTP during the formation of the 70S ribosomal complex. The polypeptide is Translation initiation factor IF-2 (Xylella fastidiosa (strain 9a5c)).